The chain runs to 167 residues: MNYTGYLLAFQLCIILGSSSCYCQADLFKEKYKLRNIFNASDSDVADGGLFLDILKNWKEESDKKIIQSQIVSVYFKIFDNLKDNQIIQKSMATIKEDLIAKFFNSSSSKLNDFPQKLIRTPVNDLKVQRKAVNELFKVMNXDLSPKSNLRKRKRSQSTFHGRRASI.

Positions 1 to 23 (MNYTGYLLAFQLCIILGSSSCYC) are cleaved as a signal peptide. Glutamine 24 is modified (pyrrolidone carboxylic acid). 2 N-linked (GlcNAc...) asparagine glycosylation sites follow: asparagine 39 and asparagine 105. The segment at 148-167 (SNLRKRKRSQSTFHGRRASI) is disordered. Basic residues predominate over residues 149–167 (NLRKRKRSQSTFHGRRASI).

This sequence belongs to the type II (or gamma) interferon family. In terms of assembly, homodimer. Interacts with IFNGR1 (via extracellular domain); this interaction promotes IFNGR1 dimerization. In terms of tissue distribution, released primarily from activated T lymphocytes.

It is found in the secreted. Functionally, type II interferon produced by immune cells such as T-cells and NK cells that plays crucial roles in antimicrobial, antiviral, and antitumor responses by activating effector immune cells and enhancing antigen presentation. Primarily signals through the JAK-STAT pathway after interaction with its receptor IFNGR1 to affect gene regulation. Upon IFNG binding, IFNGR1 intracellular domain opens out to allow association of downstream signaling components JAK2, JAK1 and STAT1, leading to STAT1 activation, nuclear translocation and transcription of IFNG-regulated genes. Many of the induced genes are transcription factors such as IRF1 that are able to further drive regulation of a next wave of transcription. Plays a role in class I antigen presentation pathway by inducing a replacement of catalytic proteasome subunits with immunoproteasome subunits. In turn, increases the quantity, quality, and repertoire of peptides for class I MHC loading. Increases the efficiency of peptide generation also by inducing the expression of activator PA28 that associates with the proteasome and alters its proteolytic cleavage preference. Up-regulates as well MHC II complexes on the cell surface by promoting expression of several key molecules such as cathepsins B/CTSB, H/CTSH, and L/CTSL. Participates in the regulation of hematopoietic stem cells during development and under homeostatic conditions by affecting their development, quiescence, and differentiation. This is Interferon gamma (IFNG) from Dasypus novemcinctus (Nine-banded armadillo).